The chain runs to 208 residues: Small ribosomal subunit protein uS2 (208 aa).

Belongs to the universal ribosomal protein uS2 family.

The sequence is that of Small ribosomal subunit protein uS2 from Pyrobaculum calidifontis (strain DSM 21063 / JCM 11548 / VA1).